A 281-amino-acid chain; its full sequence is NADPH-dependent 7-cyano-7-deazaguanine reductase (281 aa).

81–83 (IES) is a binding site for substrate. 83–84 (SK) contributes to the NADPH binding site. Cysteine 188 functions as the Thioimide intermediate in the catalytic mechanism. The active-site Proton donor is aspartate 195. Substrate is bound at residue 227–228 (HE). Residue 256–257 (RG) participates in NADPH binding.

It belongs to the GTP cyclohydrolase I family. QueF type 2 subfamily. In terms of assembly, homodimer.

The protein resides in the cytoplasm. It carries out the reaction 7-aminomethyl-7-carbaguanine + 2 NADP(+) = 7-cyano-7-deazaguanine + 2 NADPH + 3 H(+). It functions in the pathway tRNA modification; tRNA-queuosine biosynthesis. Functionally, catalyzes the NADPH-dependent reduction of 7-cyano-7-deazaguanine (preQ0) to 7-aminomethyl-7-deazaguanine (preQ1). The polypeptide is NADPH-dependent 7-cyano-7-deazaguanine reductase (Polaromonas naphthalenivorans (strain CJ2)).